Here is a 166-residue protein sequence, read N- to C-terminus: Transcription factor HES-5 (166 aa).

One can recognise a bHLH domain in the interval K16–S72. The region spanning Y88–F119 is the Orange domain. Residues P125–W166 form a disordered region. Residues A142–R156 show a composition bias toward low complexity. Residues W163–W166 carry the WRPW motif motif.

As to quaternary structure, transcription repression requires formation of a complex with a corepressor protein of the Groucho/TLE family. In terms of tissue distribution, expressed predominantly in embryonic neural lineage cells.

Its subcellular location is the nucleus. Transcriptional repressor of genes that require a bHLH protein for their transcription. Plays an important role as neurogenesis negative regulator. This is Transcription factor HES-5 (Hes5) from Rattus norvegicus (Rat).